The sequence spans 266 residues: Vitamin B12-binding protein (266 aa).

The first 22 residues, 1-22 (MAKSLFRALVALSFLAPLWLNA), serve as a signal peptide directing secretion. The region spanning 25 to 266 (RVITLSPANT…QLCNALSQVD (242 aa)) is the Fe/B12 periplasmic-binding domain. Cyanocob(III)alamin is bound by residues Tyr50 and 242–246 (DWFER). Residues Cys183 and Cys259 are joined by a disulfide bond.

Belongs to the BtuF family. The complex is composed of two ATP-binding proteins (BtuD), two transmembrane proteins (BtuC) and a solute-binding protein (BtuF).

The protein localises to the periplasm. Part of the ABC transporter complex BtuCDF involved in vitamin B12 import. Binds vitamin B12 and delivers it to the periplasmic surface of BtuC. The sequence is that of Vitamin B12-binding protein (btuF) from Escherichia coli (strain K12).